The sequence spans 240 residues: MAENVLSAQKRTEQGKGPARRLRQQGLIPAVVYGGKREPTHVALDPATLLKAIETPHKFNTLLELQVEGASKHVLFKDYTVDPVTRKLLHADFLEVSMDQPVKVNVPVVTVGRAAGVAEGGILSVAAHAIVVEALPNKIPVRIEVDVTELKIGRSLHVSELKAPEGCKFKFQTDYVVVFVAVPEKEEVAAPVAAAVPGAAPAEGAAPAAGAAAPAAGAAPAAGAAPAKGGEAKGGDKGKK.

Disordered regions lie at residues 1-20 (MAENVLSAQKRTEQGKGPAR) and 220-240 (PAAGAAPAKGGEAKGGDKGKK). A compositionally biased stretch (low complexity) spans 220 to 229 (PAAGAAPAKG). Positions 230 to 240 (GEAKGGDKGKK) are enriched in basic and acidic residues.

Belongs to the bacterial ribosomal protein bL25 family. CTC subfamily. Part of the 50S ribosomal subunit; part of the 5S rRNA/L5/L18/L25 subcomplex. Contacts the 5S rRNA. Binds to the 5S rRNA independently of L5 and L18.

Functionally, this is one of the proteins that binds to the 5S RNA in the ribosome where it forms part of the central protuberance. The polypeptide is Large ribosomal subunit protein bL25 (Anaeromyxobacter dehalogenans (strain 2CP-C)).